Consider the following 405-residue polypeptide: Ubiquitin-like modifier-activating enzyme 5 (405 aa).

The tract at residues 1 to 44 (MATVEELQTRVKQLEEELERERTRNRGGTDGGGGRKKIDQMSSE) is disordered. The span at 7-24 (LQTRVKQLEEELERERTR) shows a compositional bias: basic and acidic residues. The ATP site is built by Gly81, Asp102, Lys125, Asn148, and Asn182. Positions 224 and 227 each coordinate Zn(2+). The Glycyl thioester intermediate role is filled by Cys248. Residues Cys301 and Cys306 each coordinate Zn(2+). Positions 346 to 377 (AETTEEELKAASHGHVPELVEGVHVAYVRPMT) are linker. Positions 390 to 405 (DDQESLEDLMAKMKSI) match the UFC1-binding sequence (UFC) motif.

Belongs to the ubiquitin-activating E1 family. UBA5 subfamily. As to quaternary structure, homodimer; homodimerization is required for UFM1 activation. Interacts (via UIS motif) with UFM1; binds UFM1 via a trans-binding mechanism in which UFM1 interacts with distinct sites in both subunits of the UBA5 homodimer. Interacts (via C-terminus) with UFC1.

It localises to the cytoplasm. The protein resides in the nucleus. Its subcellular location is the endoplasmic reticulum membrane. The protein localises to the golgi apparatus. In terms of biological role, E1-like enzyme which specifically catalyzes the first step in ufmylation. Activates UFM1 by first adenylating its C-terminal glycine residue with ATP, and thereafter linking this residue to the side chain of a cysteine residue in E1, yielding a UFM1-E1 thioester and free AMP. Activates UFM1 via a trans-binding mechanism, in which UFM1 interacts with distinct sites in both subunits of the UBA5 homodimer. Trans-binding also promotes stabilization of the UBA5 homodimer, and enhances ATP-binding. Transfer of UFM1 from UBA5 to the E2-like enzyme UFC1 also takes place using a trans mechanism. This is Ubiquitin-like modifier-activating enzyme 5 from Branchiostoma floridae (Florida lancelet).